Here is a 219-residue protein sequence, read N- to C-terminus: Small ribosomal subunit protein uS3c (219 aa).

Residues 43–120 (IQNYIQKNMQ…KINITITKIT (78 aa)) enclose the KH type-2 domain.

This sequence belongs to the universal ribosomal protein uS3 family. In terms of assembly, part of the 30S ribosomal subunit.

The protein localises to the plastid. Its subcellular location is the chloroplast. This chain is Small ribosomal subunit protein uS3c (rps3), found in Oenothera elata subsp. hookeri (Hooker's evening primrose).